The following is a 117-amino-acid chain: Ig heavy chain V-A2 region K-25 (117 aa).

Residue Gln-1 is modified to Pyrrolidone carboxylic acid. The 106-residue stretch at 1–106 (QSVKESEGGL…GLSYLKSSVD (106 aa)) folds into the Ig-like domain. A disulfide bond links Cys-21 and Cys-91.

This chain is Ig heavy chain V-A2 region K-25, found in Oryctolagus cuniculus (Rabbit).